A 459-amino-acid chain; its full sequence is Endoglucanase CelA (459 aa).

Residues 1–27 form the signal peptide; it reads MKRLLALLATGVSIVGLTALAGPPAQA. A CBM2 domain is found at 28–134; sequence ATGCKAEYTI…TLNGATCSGS (107 aa). Cys31 and Cys131 are disulfide-bonded. The disordered stretch occupies residues 129-151; sequence ATCSGSVTDPPTDPPTDPPATGT. The linker ('hinge') (Pro-Thr box) stretch occupies residues 136–147; it reads TDPPTDPPTDPP. Residues 148–357 form a catalytic region; that stretch reads ATGTPAAVNG…YAFHFYAASH (210 aa). Catalysis depends on Glu286, which acts as the Proton donor. The active-site Nucleophile is Glu378.

The protein belongs to the glycosyl hydrolase 5 (cellulase A) family. In terms of processing, the linker region (also termed 'hinge') may be a potential site for proteolysis.

The enzyme catalyses Endohydrolysis of (1-&gt;4)-beta-D-glucosidic linkages in cellulose, lichenin and cereal beta-D-glucans.. This Streptomyces lividans protein is Endoglucanase CelA (celA).